The following is a 145-amino-acid chain: D-aminoacyl-tRNA deacylase (145 aa).

The Gly-cisPro motif, important for rejection of L-amino acids signature appears at G137–P138.

The protein belongs to the DTD family. Homodimer.

The protein localises to the cytoplasm. The catalysed reaction is glycyl-tRNA(Ala) + H2O = tRNA(Ala) + glycine + H(+). It catalyses the reaction a D-aminoacyl-tRNA + H2O = a tRNA + a D-alpha-amino acid + H(+). Functionally, an aminoacyl-tRNA editing enzyme that deacylates mischarged D-aminoacyl-tRNAs. Also deacylates mischarged glycyl-tRNA(Ala), protecting cells against glycine mischarging by AlaRS. Acts via tRNA-based rather than protein-based catalysis; rejects L-amino acids rather than detecting D-amino acids in the active site. By recycling D-aminoacyl-tRNA to D-amino acids and free tRNA molecules, this enzyme counteracts the toxicity associated with the formation of D-aminoacyl-tRNA entities in vivo and helps enforce protein L-homochirality. This is D-aminoacyl-tRNA deacylase from Shigella dysenteriae serotype 1 (strain Sd197).